The sequence spans 85 residues: Putative membrane protein insertion efficiency factor (85 aa).

The protein belongs to the UPF0161 family.

The protein localises to the cell membrane. Its function is as follows. Could be involved in insertion of integral membrane proteins into the membrane. The polypeptide is Putative membrane protein insertion efficiency factor (Leifsonia xyli subsp. xyli (strain CTCB07)).